The primary structure comprises 205 residues: Golgi apparatus membrane protein TVP23 homolog B (205 aa).

The residue at position 1 (methionine 1) is an N-acetylmethionine. Residues 1 to 21 are disordered; that stretch reads MLQQDSNDDTEDVSLFDAEEE. The next 4 membrane-spanning stretches (helical) occupy residues 34-53, 54-72, 126-146, and 152-172; these read PVAS…VYLL, CGLL…ILLL, IFWL…FSAL, and KWLA…YGYI.

It belongs to the TVP23 family.

It localises to the membrane. In Homo sapiens (Human), this protein is Golgi apparatus membrane protein TVP23 homolog B (TVP23B).